Here is a 284-residue protein sequence, read N- to C-terminus: MLIIETLPLLRQHIRRLRQEGKRVALVPTMGNLHDGHMKLVDEAKARADVVIVSIFVNPMQFDRPDDLVRYPRTLQEDCEKLNKRKVDYVFAPAVEEIYPHGLEGQTYVDVPGLSTMLEGASRPGHFRGVSTIVSKLFNLIQPDIACFGEKDFQQLALIRKMVADMSYDIEIVGVPIIRAKDGLALSSRNAYLTAEQRKIAPGLYNVMNRIAEKLIAGNRELQEIIAIAEQELNEKGFRADDIQIRDADTLLELTETSKRAVILAAAWLGQARLIDNQSVTLAQ.

30–37 (MGNLHDGH) contacts ATP. The active-site Proton donor is the His37. (R)-pantoate is bound at residue Gln61. Residue Gln61 participates in beta-alanine binding. 149–152 (GEKD) provides a ligand contact to ATP. Gln155 lines the (R)-pantoate pocket. ATP contacts are provided by residues Ile178 and 186-189 (LSSR).

Belongs to the pantothenate synthetase family. Homodimer.

The protein localises to the cytoplasm. The catalysed reaction is (R)-pantoate + beta-alanine + ATP = (R)-pantothenate + AMP + diphosphate + H(+). It functions in the pathway cofactor biosynthesis; (R)-pantothenate biosynthesis; (R)-pantothenate from (R)-pantoate and beta-alanine: step 1/1. In terms of biological role, catalyzes the condensation of pantoate with beta-alanine in an ATP-dependent reaction via a pantoyl-adenylate intermediate. The protein is Pantothenate synthetase of Salmonella newport (strain SL254).